Here is an 80-residue protein sequence, read N- to C-terminus: Exodeoxyribonuclease 7 small subunit (80 aa).

This sequence belongs to the XseB family. As to quaternary structure, heterooligomer composed of large and small subunits.

It is found in the cytoplasm. It catalyses the reaction Exonucleolytic cleavage in either 5'- to 3'- or 3'- to 5'-direction to yield nucleoside 5'-phosphates.. In terms of biological role, bidirectionally degrades single-stranded DNA into large acid-insoluble oligonucleotides, which are then degraded further into small acid-soluble oligonucleotides. The chain is Exodeoxyribonuclease 7 small subunit from Maridesulfovibrio salexigens (strain ATCC 14822 / DSM 2638 / NCIMB 8403 / VKM B-1763) (Desulfovibrio salexigens).